The following is a 32-amino-acid chain: WLGCARVKEACGPWEWPCCSGLKCDGSECHPQ.

Intrachain disulfides connect Cys-4-Cys-19, Cys-11-Cys-24, and Cys-18-Cys-29.

It belongs to the neurotoxin 14 (magi-1) family. The protein to aptotoxin III. Expressed by the venom gland.

The protein resides in the secreted. Functionally, is both paralytic and lethal, when injected into lepidopteran larvae. Is a slower acting toxin, being lethal at 24 hours, but not paralytic at 1 hour post-injection. In Apomastus schlingeri (Trap-door spider), this protein is U3-cyrtautoxin-As1a.